The sequence spans 440 residues: uncharacterized protein (440 aa).

Helical transmembrane passes span 1–21 (MLLVNLAIFIAFLLLLAQLYR), 29–49 (TVFIGLLLGLLFGAVLQSAFE), 70–90 (LLQMIVMPLVFVSILSAIARI), 101–121 (VGVLSTLLITTAISAAIGIAM), 179–199 (TSIISVVIFSALLGVAALSLG), 226–246 (FVIRLTPYGVFALMIKMAATS), 258–278 (IVASYAAIALMFVVHGILLFF), 343–363 (IYPAMLAVMVAPMVGIDPFSF), 366–386 (ILTLIFVVAISSFGIAGVGGG), and 389–409 (FAAIVVLSTLGLPLELIGLLI).

The protein belongs to the dicarboxylate/amino acid:cation symporter (DAACS) (TC 2.A.23) family.

The protein resides in the cell membrane. This is an uncharacterized protein from Haemophilus influenzae (strain ATCC 51907 / DSM 11121 / KW20 / Rd).